The sequence spans 374 residues: Histidinol-phosphate aminotransferase 2 (374 aa).

An N6-(pyridoxal phosphate)lysine modification is found at lysine 227.

The protein belongs to the class-II pyridoxal-phosphate-dependent aminotransferase family. Histidinol-phosphate aminotransferase subfamily. As to quaternary structure, homodimer. Pyridoxal 5'-phosphate serves as cofactor.

It catalyses the reaction L-histidinol phosphate + 2-oxoglutarate = 3-(imidazol-4-yl)-2-oxopropyl phosphate + L-glutamate. Its pathway is amino-acid biosynthesis; L-histidine biosynthesis; L-histidine from 5-phospho-alpha-D-ribose 1-diphosphate: step 7/9. The chain is Histidinol-phosphate aminotransferase 2 (hisC2) from Ralstonia nicotianae (strain ATCC BAA-1114 / GMI1000) (Ralstonia solanacearum).